The primary structure comprises 284 residues: Kynurenine formamidase avaC (284 aa).

The HGGXW signature appears at 47–51 (HGGGW). Serine 130 acts as the Nucleophile in catalysis.

It belongs to the kynurenine formamidase family.

The catalysed reaction is N-formyl-L-kynurenine + H2O = L-kynurenine + formate + H(+). The protein operates within secondary metabolite metabolism. Kynurenine formamidase; part of the cluster that mediates the biosynthesis of a highly modified cyclo-arginine-tryptophan dipeptide (cRW). Within the pathway, avaC catalyzes the deformylation of the cyclo-Arg-formylkynurenine iketopiperazine (DKP), produced by the FAD-dependent monooxygenase avaB. The first step of the pathway is perfornmed by the arginine-containing cyclodipeptide synthase (RCPDS) avaA that acts as the scaffold-generating enzyme and is responsible for formation of the cyclo-Arg-Trp (cRW) diketopiperazine. AvaB then acts as a multifunctional flavoenzyme that is responsible for generating the cyclo-Arg-formylkynurenine DKP, which can be deformylated by avaC. AvaB then further catalyzes an additional N-oxidation followed by cyclization and dehydration. The next step is an N-acetylation of the guanidine group catalyzed by the arginine N-acetyltransferase avaD. The roles of the additional enzymes identified within the ava cluster still have to be determined. The protein is Kynurenine formamidase avaC of Aspergillus versicolor.